Here is a 345-residue protein sequence, read N- to C-terminus: Linoleate 10R-lipoxygenase COP4 (345 aa).

Mg(2+) contacts are provided by aspartate 87, aspartate 91, asparagine 222, serine 226, and glutamate 230. The DDXXD motif signature appears at 87–91 (DEISD).

The protein belongs to the terpene synthase family. It depends on Mg(2+) as a cofactor.

It catalyses the reaction (2E,6E)-farnesyl diphosphate + H2O = cubebol + diphosphate. The enzyme catalyses (2E,6E)-farnesyl diphosphate = beta-copaene + diphosphate. The catalysed reaction is (2E,6E)-farnesyl diphosphate = beta-cubebene + diphosphate. It carries out the reaction (2E,6E)-farnesyl diphosphate = (+)-sativene + diphosphate. Functionally, sesquiterpene synthase that catalyzes the cyclization of farnesyl diphosphate (FPP) into multiple products, including germacrene D, beta-copaene, beta-cubebene, (+)-sativene and cubebol, a natural sesquiterpene alcohol used in the food industry for its cooling and refreshing taste. Terpenoid hydrocarbons resulting from cyclization of farnesyl diphosphate are intermediates in the biosynthesis of biologically active compounds such as antibiotics, toxins and pheromones. The protein is Linoleate 10R-lipoxygenase COP4 (COP4) of Coprinopsis cinerea (strain Okayama-7 / 130 / ATCC MYA-4618 / FGSC 9003) (Inky cap fungus).